Reading from the N-terminus, the 321-residue chain is Solute carrier family 25 member 33 (321 aa).

Solcar repeat units follow at residues 9-118, 126-213, and 231-315; these read ENTL…AKEQ, NSNI…LKKY, and TSFF…IVYL. The next 6 membrane-spanning stretches (helical) occupy residues 12-32, 49-65, 121-141, 190-210, 233-253, and 298-318; these read LLHL…TCPL, VYYP…AGMV, GIFV…AAFI, LTAS…YESL, FFGL…IAYP, and QIPN…LLED.

The protein belongs to the mitochondrial carrier (TC 2.A.29) family. As to expression, expressed in the central nervous system. Also expressed in testis and skeletal muscle. Weakly expressed in heart, liver, kidney, prostate, colon and peripheral blood leukocytes.

The protein resides in the mitochondrion inner membrane. It catalyses the reaction UTP(in) + UDP(out) = UTP(out) + UDP(in). It carries out the reaction dUTP(out) + UTP(in) = dUTP(in) + UTP(out). The enzyme catalyses 5-methyl-UTP(out) + UTP(in) = 5-methyl-UTP(in) + UTP(out). The catalysed reaction is 5-methyl-UDP(out) + UTP(in) = 5-methyl-UDP(in) + UTP(out). It catalyses the reaction UTP(in) + CTP(out) = UTP(out) + CTP(in). It carries out the reaction CDP(out) + UTP(in) = CDP(in) + UTP(out). The enzyme catalyses dCTP(out) + UTP(in) = dCTP(in) + UTP(out). The catalysed reaction is dCDP(out) + UTP(in) = dCDP(in) + UTP(out). It catalyses the reaction UTP(in) + GTP(out) = UTP(out) + GTP(in). It carries out the reaction UTP(in) + GDP(out) = UTP(out) + GDP(in). The enzyme catalyses dGTP(out) + UTP(in) = dGTP(in) + UTP(out). The catalysed reaction is dGDP(out) + UTP(in) = dGDP(in) + UTP(out). It catalyses the reaction ITP(out) + UTP(in) = ITP(in) + UTP(out). Inhibited by pyridoxal 5'-phosphate, 4,7-diphenyl-1,10-phenanthroline, tannic acid, and mercurials (mercury dichloride, mersalyl acid, p-hydroxymercuribenzoate). Its function is as follows. Mitochondrial transporter that imports/exports pyrimidine nucleotides into and from mitochondria. Selectively transports uridine, thymidine, guanosine, cytosine and inosine (deoxy)nucleoside di- and triphosphates by an antiport mechanism. May import (deoxy)nucleoside triphosphates in exchange for intramitochondrial (deoxy)nucleoside diphosphates, thus providing precursors necessary for de novo synthesis of mitochondrial DNA and RNA while exporting products of their catabolism. Participates in mitochondrial genome maintenance, regulation of mitochondrial membrane potential and mitochondrial respiration. Upon INS or IGF1 stimulation regulates cell growth and proliferation by controlling mitochondrial DNA replication and transcription, the ratio of mitochondria-to nuclear-encoded components of the electron transport chain resulting in control of mitochondrial ROS production. Participates in dendritic cell endocytosis and may associate with mitochondrial oxidative phosphorylation. This Homo sapiens (Human) protein is Solute carrier family 25 member 33 (SLC25A33).